Reading from the N-terminus, the 397-residue chain is Acetate kinase (397 aa).

Asn-8 serves as a coordination point for Mg(2+). Residue Lys-15 coordinates ATP. Residue Arg-89 participates in substrate binding. The Proton donor/acceptor role is filled by Asp-146. ATP is bound by residues 206-210 (HVGNG), 283-285 (DMR), and 331-335 (GMGEN). A Mg(2+)-binding site is contributed by Glu-383.

The protein belongs to the acetokinase family. Homodimer. Mg(2+) is required as a cofactor. It depends on Mn(2+) as a cofactor.

It is found in the cytoplasm. The enzyme catalyses acetate + ATP = acetyl phosphate + ADP. It participates in metabolic intermediate biosynthesis; acetyl-CoA biosynthesis; acetyl-CoA from acetate: step 1/2. Functionally, catalyzes the formation of acetyl phosphate from acetate and ATP. Can also catalyze the reverse reaction. In Streptococcus agalactiae serotype III (strain NEM316), this protein is Acetate kinase.